The following is a 147-amino-acid chain: uncharacterized protein (147 aa).

The region spanning 2–63 is the HTH asnC-type domain; the sequence is LDELDKKIIG…KLNYENIGYD (62 aa). The segment at residues 21-40 is a DNA-binding region (H-T-H motif); the sequence is YREIAKELNVAVGTIYNRIK.

This is an uncharacterized protein from Pyrococcus abyssi (strain GE5 / Orsay).